Consider the following 347-residue polypeptide: Aspartate-semialdehyde dehydrogenase (347 aa).

NADP(+)-binding positions include 13 to 16 (TGAV) and 41 to 42 (RS). Arg101 lines the phosphate pocket. Cys132 serves as the catalytic Acyl-thioester intermediate. Gln159 is a substrate binding site. Position 162 to 163 (162 to 163 (SG)) interacts with NADP(+). Lys216 provides a ligand contact to phosphate. Arg238 is a binding site for substrate. Catalysis depends on His245, which acts as the Proton acceptor. An NADP(+)-binding site is contributed by Asn319.

The protein belongs to the aspartate-semialdehyde dehydrogenase family. In terms of assembly, homodimer.

It carries out the reaction L-aspartate 4-semialdehyde + phosphate + NADP(+) = 4-phospho-L-aspartate + NADPH + H(+). Its pathway is amino-acid biosynthesis; L-lysine biosynthesis via DAP pathway; (S)-tetrahydrodipicolinate from L-aspartate: step 2/4. It functions in the pathway amino-acid biosynthesis; L-methionine biosynthesis via de novo pathway; L-homoserine from L-aspartate: step 2/3. It participates in amino-acid biosynthesis; L-threonine biosynthesis; L-threonine from L-aspartate: step 2/5. Its function is as follows. Catalyzes the NADPH-dependent formation of L-aspartate-semialdehyde (L-ASA) by the reductive dephosphorylation of L-aspartyl-4-phosphate. This is Aspartate-semialdehyde dehydrogenase from Legionella pneumophila.